Here is a 614-residue protein sequence, read N- to C-terminus: Glutamine--fructose-6-phosphate aminotransferase [isomerizing] (614 aa).

The active-site Nucleophile; for GATase activity is cysteine 2. One can recognise a Glutamine amidotransferase type-2 domain in the interval 2 to 221; it reads CGIVGYIGKR…DGEIAVINRG (220 aa). 2 consecutive SIS domains span residues 291-430 and 463-604; these read YKEK…EKGT and LSKT…VDQP. Lysine 609 serves as the catalytic For Fru-6P isomerization activity.

In terms of assembly, homodimer.

Its subcellular location is the cytoplasm. The catalysed reaction is D-fructose 6-phosphate + L-glutamine = D-glucosamine 6-phosphate + L-glutamate. Functionally, catalyzes the first step in hexosamine metabolism, converting fructose-6P into glucosamine-6P using glutamine as a nitrogen source. The polypeptide is Glutamine--fructose-6-phosphate aminotransferase [isomerizing] (Bacteroides thetaiotaomicron (strain ATCC 29148 / DSM 2079 / JCM 5827 / CCUG 10774 / NCTC 10582 / VPI-5482 / E50)).